We begin with the raw amino-acid sequence, 201 residues long: Probable GTP-binding protein EngB (201 aa).

Residues 22 to 197 (TFPEYAFIGR…LNYIESINKE (176 aa)) enclose the EngB-type G domain. GTP is bound by residues 30–37 (GRSNVGKS), 57–61 (GKTML), 75–78 (DLPG), 142–145 (TKAD), and 175–178 (ITSS). The Mg(2+) site is built by S37 and T59.

This sequence belongs to the TRAFAC class TrmE-Era-EngA-EngB-Septin-like GTPase superfamily. EngB GTPase family. Mg(2+) is required as a cofactor.

Necessary for normal cell division and for the maintenance of normal septation. The polypeptide is Probable GTP-binding protein EngB (Bacteroides fragilis (strain ATCC 25285 / DSM 2151 / CCUG 4856 / JCM 11019 / LMG 10263 / NCTC 9343 / Onslow / VPI 2553 / EN-2)).